The chain runs to 344 residues: Pre-mRNA polyadenylation factor fip1 (344 aa).

2 disordered regions span residues 1-99 (MSNA…LSTA) and 230-344 (NYNT…RNRY). The segment covering 28–38 (VTVSNAKSPEQ) has biased composition (polar residues). The segment covering 39–50 (ASEESDDSDIEF) has biased composition (acidic residues). The segment covering 80-92 (QVEKTAVEVKTTE) has biased composition (basic and acidic residues). Positions 243 to 258 (SGAATPNAYVNNNPSS) are enriched in low complexity. Positions 271-301 (NITSSAGMTHAQPTHNPTSSYGNGASTNYNA) are enriched in polar residues. Residues 302–317 (SRPPSNHPHSSNYPSS) are compositionally biased toward low complexity.

The protein belongs to the FIP1 family.

It is found in the nucleus. In terms of biological role, pre-mRNA polyadenylation factor that directly interacts with poly(A) polymerase. The polypeptide is Pre-mRNA polyadenylation factor fip1 (Schizosaccharomyces pombe (strain 972 / ATCC 24843) (Fission yeast)).